The primary structure comprises 90 residues: Mitochondrial import inner membrane translocase subunit Tim10 (90 aa).

The Twin CX3C motif signature appears at 29 to 54 (CHRKCVPPHYKEAELSKGESVCLDRC). 2 disulfides stabilise this stretch: Cys-29-Cys-54 and Cys-33-Cys-50.

It belongs to the small Tim family. Heterohexamer; composed of 3 copies of TIMM9 and 3 copies of TIMM10/TIM10A, named soluble 70 kDa complex. The complex forms a 6-bladed alpha-propeller structure and associates with the TIMM22 component of the TIM22 complex. Interacts with multi-pass transmembrane proteins in transit. Also forms a complex composed of TIMM9, TIMM10/TIM10A and FXC1/TIM10B.

Its subcellular location is the mitochondrion inner membrane. In terms of biological role, mitochondrial intermembrane chaperone that participates in the import and insertion of multi-pass transmembrane proteins into the mitochondrial inner membrane. May also be required for the transfer of beta-barrel precursors from the TOM complex to the sorting and assembly machinery (SAM complex) of the outer membrane. Acts as a chaperone-like protein that protects the hydrophobic precursors from aggregation and guide them through the mitochondrial intermembrane space. This chain is Mitochondrial import inner membrane translocase subunit Tim10 (Timm10), found in Rattus norvegicus (Rat).